The primary structure comprises 51 residues: Sperm protamine P1 (51 aa).

This sequence belongs to the protamine P1 family. Testis.

Its subcellular location is the nucleus. The protein resides in the chromosome. Its function is as follows. Protamines substitute for histones in the chromatin of sperm during the haploid phase of spermatogenesis. They compact sperm DNA into a highly condensed, stable and inactive complex. The sequence is that of Sperm protamine P1 (PRM1) from Trachypithecus johnii (Nilgiri langur).